Here is a 446-residue protein sequence, read N- to C-terminus: Phosphoglucosamine mutase (446 aa).

The Phosphoserine intermediate role is filled by Ser101. Ser101, Asp240, Asp242, and Asp244 together coordinate Mg(2+). Ser101 carries the post-translational modification Phosphoserine.

This sequence belongs to the phosphohexose mutase family. The cofactor is Mg(2+). In terms of processing, activated by phosphorylation.

The enzyme catalyses alpha-D-glucosamine 1-phosphate = D-glucosamine 6-phosphate. Its function is as follows. Catalyzes the conversion of glucosamine-6-phosphate to glucosamine-1-phosphate. The polypeptide is Phosphoglucosamine mutase (Pseudomonas entomophila (strain L48)).